Consider the following 34-residue polypeptide: Photosystem II reaction center protein T (34 aa).

Residues 3 to 23 traverse the membrane as a helical segment; it reads ALVYTFLLVSTLGIIFFAIFF.

It belongs to the PsbT family. As to quaternary structure, PSII is composed of 1 copy each of membrane proteins PsbA, PsbB, PsbC, PsbD, PsbE, PsbF, PsbH, PsbI, PsbJ, PsbK, PsbL, PsbM, PsbT, PsbY, PsbZ, Psb30/Ycf12, at least 3 peripheral proteins of the oxygen-evolving complex and a large number of cofactors. It forms dimeric complexes.

It is found in the plastid. The protein localises to the chloroplast thylakoid membrane. Found at the monomer-monomer interface of the photosystem II (PS II) dimer, plays a role in assembly and dimerization of PSII. PSII is a light-driven water plastoquinone oxidoreductase, using light energy to abstract electrons from H(2)O, generating a proton gradient subsequently used for ATP formation. In Solanum bulbocastanum (Wild potato), this protein is Photosystem II reaction center protein T.